Consider the following 366-residue polypeptide: MANLSSLPSPIYCVSFNQDNSGFAISWKDSFKIFDSTTGRLCYERAAGAFVIVEMLYSSDLLAIVGAGEQASLSPRRLCLFKTTTGLPLRELNFLTSILAVRMNKKRLVVVLLEKTFVYDLNTLVMLDTIDTVPNPKGLSAFSPSLEGCYLAVPASTTKGSVLVYNVMDLQSHSEIDAHRSPLAAIALSSNGMYIATGSEQGTLIRVHLVSEATKSYSFRRGTYPSTIYSLSFGPSTQLPDILIATSSSGSIHAFSLSLAINQRSKRSTSFLGSVLPDSVSDALDPAHHHVLQNAVSSGIRSYAVVRKIDKLEGTSSPSHFTSLRATVSVITYNGYFQEYTLSINNKNESLWTLEREFNLFSITTG.

WD repeat units lie at residues 6 to 44 (SLPS…LCYE), 178 to 218 (AHRS…KSYS), and 223 to 265 (TYPS…NQRS).

This sequence belongs to the WD repeat PROPPIN family. In terms of assembly, component of the PI(3,5)P2 regulatory complex at least composed of ATG18, SAC/FIG4, FAB1 and VAC14. In terms of tissue distribution, expressed in roots, stems, flowers and leaves.

The protein resides in the preautophagosomal structure membrane. It is found in the vacuole membrane. In terms of biological role, the PI(3,5)P2 regulatory complex regulates both the synthesis and turnover of phosphatidylinositol 3,5-bisphosphate (PtdIns(3,5)P2). Required for autophagy. The sequence is that of Autophagy-related protein 18b (ATG18B) from Arabidopsis thaliana (Mouse-ear cress).